We begin with the raw amino-acid sequence, 155 residues long: MIDLIARKTPPPGLRPALRAALTSAMRHFGVEDREVTVVLVGDRTIRALKREHWGEDAPTDVLSFPTWEPGDPFMPPHLGDIIISLDTAGRQAAARGHSLTREVALLASHGLTHLVGHDHPHAEGLGFEEGATGPEWQVFHDAWEAARLALPPEA.

Residues histidine 110, histidine 114, and histidine 120 each coordinate Zn(2+).

The protein belongs to the endoribonuclease YbeY family. Zn(2+) is required as a cofactor.

It is found in the cytoplasm. Single strand-specific metallo-endoribonuclease involved in late-stage 70S ribosome quality control and in maturation of the 3' terminus of the 16S rRNA. This Deinococcus geothermalis (strain DSM 11300 / CIP 105573 / AG-3a) protein is Endoribonuclease YbeY.